Here is a 129-residue protein sequence, read N- to C-terminus: UPF0212 protein MM_2357 (129 aa).

This sequence belongs to the UPF0212 family.

In Methanosarcina mazei (strain ATCC BAA-159 / DSM 3647 / Goe1 / Go1 / JCM 11833 / OCM 88) (Methanosarcina frisia), this protein is UPF0212 protein MM_2357.